An 868-amino-acid chain; its full sequence is Leucine--tRNA ligase (868 aa).

Positions 42 to 52 (PYPSGKLHMGH) match the 'HIGH' region motif. A 'KMSKS' region motif is present at residues 627–631 (KMAKS). An ATP-binding site is contributed by lysine 630.

The protein belongs to the class-I aminoacyl-tRNA synthetase family.

It localises to the cytoplasm. It carries out the reaction tRNA(Leu) + L-leucine + ATP = L-leucyl-tRNA(Leu) + AMP + diphosphate. This is Leucine--tRNA ligase from Pseudomonas fluorescens (strain Pf0-1).